We begin with the raw amino-acid sequence, 345 residues long: Phosphoribosylformylglycinamidine cyclo-ligase (345 aa).

Belongs to the AIR synthase family.

It localises to the cytoplasm. The catalysed reaction is 2-formamido-N(1)-(5-O-phospho-beta-D-ribosyl)acetamidine + ATP = 5-amino-1-(5-phospho-beta-D-ribosyl)imidazole + ADP + phosphate + H(+). The protein operates within purine metabolism; IMP biosynthesis via de novo pathway; 5-amino-1-(5-phospho-D-ribosyl)imidazole from N(2)-formyl-N(1)-(5-phospho-D-ribosyl)glycinamide: step 2/2. This chain is Phosphoribosylformylglycinamidine cyclo-ligase, found in Salmonella typhimurium (strain LT2 / SGSC1412 / ATCC 700720).